A 221-amino-acid polypeptide reads, in one-letter code: Iron-sulfur cluster repair protein YtfE (221 aa).

Belongs to the RIC family. YtfE subfamily. In terms of assembly, homodimer.

Its subcellular location is the cytoplasm. Its function is as follows. Di-iron-containing protein involved in the repair of iron-sulfur clusters damaged by oxidative and nitrosative stress conditions. In Yersinia pseudotuberculosis serotype IB (strain PB1/+), this protein is Iron-sulfur cluster repair protein YtfE.